The sequence spans 119 residues: Parathyroid hormone (119 aa).

Positions 1 to 25 are cleaved as a signal peptide; the sequence is MTSTKNLAKAIVILYAICFFTNSDG. The propeptide occupies 26 to 31; it reads RPMMKR.

This sequence belongs to the parathyroid hormone family. Interacts with PTH1R (via N-terminal extracellular domain).

The protein resides in the secreted. Functionally, parathyroid hormone elevates calcium level by dissolving the salts in bone and preventing their renal excretion. Acts by binding to its receptor, PTH1R, activating G protein-coupled receptor signaling. Stimulates [1-14C]-2-deoxy-D-glucose (2DG) transport and glycogen synthesis in osteoblastic cells. This Gallus gallus (Chicken) protein is Parathyroid hormone.